Here is a 101-residue protein sequence, read N- to C-terminus: uncharacterized protein (101 aa).

Positions 1–27 (MQLTGSIYPWFTAYALLKSTLMELINS) are cleaved as a signal peptide. The next 2 helical transmembrane spans lie at 42 to 64 (LVPY…AISF) and 79 to 98 (TFVF…NTFL).

It is found in the cytoplasm. The protein resides in the nucleus membrane. This is an uncharacterized protein from Schizosaccharomyces pombe (strain 972 / ATCC 24843) (Fission yeast).